Consider the following 703-residue polypeptide: MLHLKVQFLDDSQKIFVVDQKSSGKALFNLSCGHLNLAEKEYFGLEFCSHSGNNVWLELLKPITKQVKNPKEVVFKFMVKFFPVDPGHLREELTRYLFTLQIKKDLALGRLPCSDNCTALMVSHILQSELGDFHEETVRKHLVQTQYLPSQASLESKIMQFHQQHIGRSPAESDILLLDIARKLDMYGIRPQPASDGEGMQIHLAVAHMGVLVLRGNTKINTFNWAKIRKLSFKRKHFLIKLHANILVLCKDTLEFTMASRDACKAFWKTCVEYHAFFRLSEEPKSKPKTLLCSKGSSFRYSGRTQRQLLEYGKKGRLKSLPFERKQYPSQYHERQCRSSPDILSDVSKQVEDLRLTYGSSYYRNVNGVHASESMLDSRRRNSAVEVTFAAELEHSKPEAEATSLHPSQSSSSFTFIYADPVFNTDPEPIEFFEERSPLSSFQTTSKFADSHTSKASPARQLTYTDVPYIPCTSQKVDIMPPQVFFYVDKPPQVPRRSLIMAEENMRPDSYVDHSAIKPAKRSPRNMRIKSLQQDLQELQEAMARTSGRSNINVEPEEEDPHLDDAFAYNLQEQTPKRSQSQSDMKTIRFPFGSEFRPLGPCPALTRKTDLFACTFAEQEFPTVLIDQSSAERYVASESSDSESEIIKPDYYFLYGKGTKSPRARIRLSSGSLQLEEEDETISFATPGAEDRTLLKPCNYFLA.

Residues 2–282 (LHLKVQFLDD…EYHAFFRLSE (281 aa)) form the FERM domain. A coiled-coil region spans residues 525-552 (RNMRIKSLQQDLQELQEAMARTSGRSNI).

In the developing cerebral cortex, strong expression is observed in the ventricular and intermediate zones at 13 and 17 dpc. At 17 dpc and P0, expression appears to be restricted to the cortical plate. In neonates, highly expressed in cortex, hippocampus, cerebellum, olfactory bulb and eye with little or no expression in liver, kidney, skeletal muscle or heart muscle (at protein level).

It localises to the cell projection. The protein localises to the neuron projection. It is found in the growth cone. Its function is as follows. Plays a role in neurite development, may be through the activation of the GTPase RAC1. Plays a role in the control of eye movement and gaze stability. This Mus musculus (Mouse) protein is FERM domain-containing protein 7.